Reading from the N-terminus, the 159-residue chain is Ribosomal RNA large subunit methyltransferase H (159 aa).

S-adenosyl-L-methionine contacts are provided by residues leucine 76, glycine 108, and 127–132; that span reads FSKMTF.

The protein belongs to the RNA methyltransferase RlmH family. As to quaternary structure, homodimer.

It is found in the cytoplasm. It catalyses the reaction pseudouridine(1915) in 23S rRNA + S-adenosyl-L-methionine = N(3)-methylpseudouridine(1915) in 23S rRNA + S-adenosyl-L-homocysteine + H(+). In terms of biological role, specifically methylates the pseudouridine at position 1915 (m3Psi1915) in 23S rRNA. This is Ribosomal RNA large subunit methyltransferase H from Clostridium kluyveri (strain NBRC 12016).